We begin with the raw amino-acid sequence, 519 residues long: Glutamate--cysteine ligase (519 aa).

The protein belongs to the glutamate--cysteine ligase type 1 family. Type 1 subfamily.

The enzyme catalyses L-cysteine + L-glutamate + ATP = gamma-L-glutamyl-L-cysteine + ADP + phosphate + H(+). The protein operates within sulfur metabolism; glutathione biosynthesis; glutathione from L-cysteine and L-glutamate: step 1/2. The sequence is that of Glutamate--cysteine ligase from Yersinia enterocolitica serotype O:8 / biotype 1B (strain NCTC 13174 / 8081).